We begin with the raw amino-acid sequence, 404 residues long: MQIGQRLGTPLSPSATRVMLLGAGELGKEVIIALQRLGVEVIAVDRYPDAPGHQVAHRAHVIDMTDAAALRALVEAERPHLIVPEIEAIATDALAAIEAAGLAEVIPTARATQLTMNREGIRRLAAEELGLATSPYAFADSFDAFSAAVAKIGMPCVVKPVMSSSGKGQSVVRSEADVKAAWDYAMAGGRVNHGRVIVEGFIDFDYEITQLTVRAIDPATLATRTYFCEPVGHVQVAGDYVESWQPQPMSAAALQKSRDIAHKVTEALGGRGLFGVELFVRGDDVWFSEVSPRPHDTGLVTLASQRQSEFELHARAILGLPVDPTLGSPAASAVIYGGLDERGIAFEGVRDALAVPGADLRLFGKPESFVKRRMGVALATGANVDEARERAKRAAAAVRPVSSR.

N(1)-(5-phospho-beta-D-ribosyl)glycinamide contacts are provided by residues 25 to 26 (EL) and Glu-85. Residues Arg-118, Lys-159, 164 to 169 (SSGKGQ), 199 to 202 (EGFI), and Glu-207 contribute to the ATP site. An ATP-grasp domain is found at 123-318 (RLAAEELGLA…EFELHARAIL (196 aa)). Mg(2+) contacts are provided by Glu-277 and Glu-289. Residues Asp-296, Lys-365, and 372-373 (RR) contribute to the N(1)-(5-phospho-beta-D-ribosyl)glycinamide site.

The protein belongs to the PurK/PurT family. Homodimer.

The enzyme catalyses N(1)-(5-phospho-beta-D-ribosyl)glycinamide + formate + ATP = N(2)-formyl-N(1)-(5-phospho-beta-D-ribosyl)glycinamide + ADP + phosphate + H(+). It functions in the pathway purine metabolism; IMP biosynthesis via de novo pathway; N(2)-formyl-N(1)-(5-phospho-D-ribosyl)glycinamide from N(1)-(5-phospho-D-ribosyl)glycinamide (formate route): step 1/1. Involved in the de novo purine biosynthesis. Catalyzes the transfer of formate to 5-phospho-ribosyl-glycinamide (GAR), producing 5-phospho-ribosyl-N-formylglycinamide (FGAR). Formate is provided by PurU via hydrolysis of 10-formyl-tetrahydrofolate. The sequence is that of Formate-dependent phosphoribosylglycinamide formyltransferase from Burkholderia vietnamiensis (strain G4 / LMG 22486) (Burkholderia cepacia (strain R1808)).